Reading from the N-terminus, the 241-residue chain is GTP cyclohydrolase III (241 aa).

It belongs to the archaeal-type GTP cyclohydrolase family.

The catalysed reaction is GTP + 3 H2O = 2-amino-5-formylamino-6-(5-phospho-D-ribosylamino)pyrimidin-4(3H)-one + 2 phosphate + 2 H(+). In terms of biological role, catalyzes the formation of 2-amino-5-formylamino-6-ribofuranosylamino-4(3H)-pyrimidinone ribonucleotide monophosphate and inorganic phosphate from GTP. Also has an independent pyrophosphate phosphohydrolase activity. The polypeptide is GTP cyclohydrolase III (Aeropyrum pernix (strain ATCC 700893 / DSM 11879 / JCM 9820 / NBRC 100138 / K1)).